Reading from the N-terminus, the 115-residue chain is Large ribosomal subunit protein uL24 (115 aa).

This sequence belongs to the universal ribosomal protein uL24 family. In terms of assembly, part of the 50S ribosomal subunit.

Functionally, one of two assembly initiator proteins, it binds directly to the 5'-end of the 23S rRNA, where it nucleates assembly of the 50S subunit. Its function is as follows. One of the proteins that surrounds the polypeptide exit tunnel on the outside of the subunit. This Deinococcus deserti (strain DSM 17065 / CIP 109153 / LMG 22923 / VCD115) protein is Large ribosomal subunit protein uL24.